A 377-amino-acid chain; its full sequence is Succinyl-diaminopimelate desuccinylase (377 aa).

Zn(2+) is bound at residue His-67. The active site involves Asp-69. Asp-100 lines the Zn(2+) pocket. Glu-134 serves as the catalytic Proton acceptor. Zn(2+) contacts are provided by Glu-135, Glu-163, and His-349.

Belongs to the peptidase M20A family. DapE subfamily. Homodimer. The cofactor is Zn(2+). Co(2+) is required as a cofactor.

The catalysed reaction is N-succinyl-(2S,6S)-2,6-diaminopimelate + H2O = (2S,6S)-2,6-diaminopimelate + succinate. Its pathway is amino-acid biosynthesis; L-lysine biosynthesis via DAP pathway; LL-2,6-diaminopimelate from (S)-tetrahydrodipicolinate (succinylase route): step 3/3. In terms of biological role, catalyzes the hydrolysis of N-succinyl-L,L-diaminopimelic acid (SDAP), forming succinate and LL-2,6-diaminopimelate (DAP), an intermediate involved in the bacterial biosynthesis of lysine and meso-diaminopimelic acid, an essential component of bacterial cell walls. The chain is Succinyl-diaminopimelate desuccinylase from Dechloromonas aromatica (strain RCB).